The primary structure comprises 90 residues: Lectin-1 (90 aa).

At Gln-1 the chain carries Pyrrolidone carboxylic acid. A disulfide bridge links Cys-46 with Cys-71.

Post-translationally, the N-terminus is blocked. Contains seven disulfide bonds. In terms of processing, proteolytically cleaved. Major mature form may consist of cleaved, disulfide-bonded N-terminal and C-terminal chains.

Its function is as follows. Lectin with specificity for complex N-linked glycans and O-linked glycans. Has hemagglutinating activity towards rabbit erythrocytes. This chain is Lectin-1, found in Hypnea musciformis (Red alga).